Consider the following 407-residue polypeptide: Peptidase T (407 aa).

Residue H77 coordinates Zn(2+). D79 is a catalytic residue. Residue D138 coordinates Zn(2+). Catalysis depends on E172, which acts as the Proton acceptor. E173, D195, and H377 together coordinate Zn(2+).

It belongs to the peptidase M20B family. The cofactor is Zn(2+).

The protein localises to the cytoplasm. The catalysed reaction is Release of the N-terminal residue from a tripeptide.. In terms of biological role, cleaves the N-terminal amino acid of tripeptides. In Aeromonas hydrophila subsp. hydrophila (strain ATCC 7966 / DSM 30187 / BCRC 13018 / CCUG 14551 / JCM 1027 / KCTC 2358 / NCIMB 9240 / NCTC 8049), this protein is Peptidase T.